A 324-amino-acid chain; its full sequence is Kelch domain-containing protein PF0436 (324 aa).

Kelch repeat units lie at residues 112–160 (EVLL…LWDG), 254–301 (GIYI…WDGR), and 303–323 (IYIV…FTPK).

The sequence is that of Kelch domain-containing protein PF0436 from Pyrococcus furiosus (strain ATCC 43587 / DSM 3638 / JCM 8422 / Vc1).